A 384-amino-acid chain; its full sequence is Interstitial collagenase (384 aa).

The signal sequence occupies residues 1 to 25 (MLSGLWSSILALLGVFLQSVGEFRA). The propeptide at 26 to 88 (ETQEQDVEIV…STCGVPDVGE (63 aa)) is activation peptide. A Cysteine switch motif is present at residues 79–86 (STCGVPDV). A Zn(2+)-binding site is contributed by C81. The Ca(2+) site is built by D113 and D129. Residues H139 and D141 each coordinate Zn(2+). Ca(2+) contacts are provided by D146, G147, G149, and N151. H154 is a binding site for Zn(2+). Positions 161, 163, and 165 each coordinate Ca(2+). H167 contributes to the Zn(2+) binding site. Residues D169, E170, and E172 each coordinate Ca(2+). Residue H189 participates in Zn(2+) binding. Residue E190 is part of the active site. Zn(2+)-binding residues include H193 and H199. The segment at 218–239 (LSQDDIDGPSGNPVQPRGPQTP) is disordered. A disulfide bridge links C242 with C381. 3 residues coordinate Ca(2+): D249, Q277, and D347. Hemopexin repeat units lie at residues 273-319 (ELGL…FGFP) and 333-381 (KQSM…WFNC).

Belongs to the peptidase M10A family. It depends on Ca(2+) as a cofactor. Zn(2+) serves as cofactor.

The protein localises to the secreted. The protein resides in the extracellular space. It is found in the extracellular matrix. It catalyses the reaction Cleavage of the triple helix of collagen at about three-quarters of the length of the molecule from the N-terminus, at 775-Gly-|-Ile-776 in the alpha1(I) chain. Cleaves synthetic substrates and alpha-macroglobulins at bonds where P1' is a hydrophobic residue.. With respect to regulation, can be activated without removal of the activation peptide. Cleaves collagens of types I, II, and III at one site in the helical domain. Also cleaves collagens of types VII and X. The polypeptide is Interstitial collagenase (Aquarana catesbeiana (American bullfrog)).